The following is a 459-amino-acid chain: MVEKLWGGRFEASLDKQTEEFGASIKFEQRLAPFDLKGSLAHVKMLGETGIITAEEATTIADGLIKVEEKLMKGQIEFKIENEDIHMNMETYLHDEIGPLAGKLHTARSRNDQVATDMHLYLKSVLSDLLKALRTLRETIVNLSVNHVDTLMPGYTHLQHAQPISFAQHLMAYYQMFTRDFERFEFNVKHTDMNPLGAAALAGTTFPIDRELTTNLLQFEKVYANSMDAVSDRDFILEFLSNSSLLMMHLSRLCEELLLWSSHEFNFVSLSDNYSTGSSIMPQKKNPDMAELIRGKSGRVYGNLISLLTVMKGLPLTYNKDLQEDKEGMFDSADTILTSLSVMDGMLSTMTVNRVNMEKATEQDFSNATELADYLAAKGLPFREAHELVGQLVLKCIKKGIYLQEVSLKDYQALSQLIEEDVYEILKSRTAVSRRNSLGGTGFESIKKQIEQAKKELQK.

The protein belongs to the lyase 1 family. Argininosuccinate lyase subfamily.

The protein resides in the cytoplasm. It carries out the reaction 2-(N(omega)-L-arginino)succinate = fumarate + L-arginine. It participates in amino-acid biosynthesis; L-arginine biosynthesis; L-arginine from L-ornithine and carbamoyl phosphate: step 3/3. This Lactococcus lactis subsp. cremoris (strain MG1363) protein is Argininosuccinate lyase.